The sequence spans 176 residues: Ribosome maturation factor RimM (176 aa).

One can recognise a PRC barrel domain in the interval 101–174; that stretch reads EGHYYIYQLL…EIRVELPPGL (74 aa).

Belongs to the RimM family. In terms of assembly, binds ribosomal protein uS19.

The protein resides in the cytoplasm. Its function is as follows. An accessory protein needed during the final step in the assembly of 30S ribosomal subunit, possibly for assembly of the head region. Essential for efficient processing of 16S rRNA. May be needed both before and after RbfA during the maturation of 16S rRNA. It has affinity for free ribosomal 30S subunits but not for 70S ribosomes. This chain is Ribosome maturation factor RimM, found in Moorella thermoacetica (strain ATCC 39073 / JCM 9320).